Here is a 618-residue protein sequence, read N- to C-terminus: Nuclear cap-binding protein subunit 3 (618 aa).

The tract at residues 1–53 (MAAVRGLRVSVKAGGGAEPEPMEVEEGEVEAAAGRTSPVEATADQTSPREVVP) is disordered. The segment covering 20-29 (EPMEVEEGEV) has biased composition (acidic residues). An RNA recognition motif (RRM) domain region spans residues 117–178 (ETLYICGVDE…LSSKPTNEKG (62 aa)). Positions 146-149 (WLDD) match the WLDD motif; essential for 7-methylguanosine-containing mRNA cap binding motif. Disordered stretches follow at residues 170 to 250 (SSKP…DLRP), 342 to 366 (PEEP…DDRV), and 426 to 618 (QLKT…DTDS). The segment covering 174–188 (TNEKGQRKKDGEHRS) has biased composition (basic and acidic residues). The segment covering 205–223 (DETEEGEVEEDNPNDAEVE) has biased composition (acidic residues). Over residues 231-240 (PPETLSQAEQ) the composition is skewed to polar residues. The segment covering 344-365 (EPIEEEEEEEEEEEEDMDEDDR) has biased composition (acidic residues). Residues 436-450 (SDSAGNSVKSRIGSK) are compositionally biased toward polar residues. Over residues 451–468 (SHSEKPADVRLILEEKRQ) the composition is skewed to basic and acidic residues. Low complexity predominate over residues 469-481 (STASRQQSSSSGK). Composition is skewed to basic and acidic residues over residues 507 to 517 (SRREPLSDVHS), 550 to 562 (PKEK…KSGE), and 583 to 596 (IKEK…KSRL). The segment covering 609–618 (ESSSGSDTDS) has biased composition (low complexity).

It belongs to the NCBP3 family. Component of an alternative cap-binding complex (CBC) composed of NCBP1/CBP80 and NCBP3.

It localises to the nucleus. Its subcellular location is the cytoplasm. In terms of biological role, associates with NCBP1/CBP80 to form an alternative cap-binding complex (CBC) which plays a key role in mRNA export. NCBP3 serves as adapter protein linking the capped RNAs (m7GpppG-capped RNA) to NCBP1/CBP80. Unlike the conventional CBC with NCBP2 which binds both small nuclear RNA (snRNA) and messenger (mRNA) and is involved in their export from the nucleus, the alternative CBC with NCBP3 does not bind snRNA and associates only with mRNA thereby playing a role in only mRNA export. The polypeptide is Nuclear cap-binding protein subunit 3 (Xenopus laevis (African clawed frog)).